The following is a 119-amino-acid chain: MANSSFKLEHPLERRQIESSRIREKYPDRIPVIVERAERSDVPNIDKKKYLVPADLTVGQFVYVVRKRIKLSAEKAIFVFVKNTLPPTAAMMSAIYDENKDEDGFLYMTYSGENTFGLV.

The Phosphatidylethanolamine amidated glycine moiety is linked to residue G117. Positions 118–119 are cleaved as a propeptide — removed in mature form; it reads LV.

It belongs to the ATG8 family. Interacts with ATG4. Interacts with NBR1. The C-terminal 2 residues are removed by ATG4 to expose Gly-117 at the C-terminus. This Gly-117 forms then a thioester bond with the 'Cys-558' of ATG7 (E1-like activating enzyme) before being transferred to the 'Cys-258' of ATG3 (the specific E2 conjugating enzyme), in order to be finally amidated with phosphatidylethanolamine. This lipid modification anchors ATG8 to autophagosomes. Constitutively expressed.

It is found in the cytoplasmic vesicle. The protein resides in the autophagosome membrane. Its subcellular location is the vacuole membrane. The protein localises to the cytoplasm. It localises to the cytoskeleton. Its function is as follows. Ubiquitin-like modifier involved in autophagosomes formation. May mediate the delivery of the autophagosomes to the vacuole via the microtubule cytoskeleton. The protein is Autophagy-related protein 8c (ATG8C) of Arabidopsis thaliana (Mouse-ear cress).